A 256-amino-acid chain; its full sequence is LexA repressor (256 aa).

Residues 1 to 31 (MTSQGRGTRRGGTRGNVRAFPEGPTDAGLTP) are disordered. The segment at residues 53–73 (VREIGEAVGLTSTSSVAHQLK) is a DNA-binding region (H-T-H motif). Residues Ser180 and Lys217 each act as for autocatalytic cleavage activity in the active site.

Belongs to the peptidase S24 family. In terms of assembly, homodimer.

It catalyses the reaction Hydrolysis of Ala-|-Gly bond in repressor LexA.. Functionally, represses a number of genes involved in the response to DNA damage (SOS response), including recA and lexA. In the presence of single-stranded DNA, RecA interacts with LexA causing an autocatalytic cleavage which disrupts the DNA-binding part of LexA, leading to derepression of the SOS regulon and eventually DNA repair. The sequence is that of LexA repressor from Frankia casuarinae (strain DSM 45818 / CECT 9043 / HFP020203 / CcI3).